A 209-amino-acid chain; its full sequence is COP9 signalosome complex subunit 8 (209 aa).

Residues 8-179 (DNAFSFRKLL…GALDVSLNRF (172 aa)) form the PCI domain. Serine 175 carries the phosphoserine modification.

It belongs to the CSN8 family. Component of the CSN complex, composed of COPS1/GPS1, COPS2, COPS3, COPS4, COPS5, COPS6, COPS7 (COPS7A or COPS7B), COPS8 and COPS9. In the complex, it probably interacts directly with COPS3, COPS4 and COPS7 (COPS7A or COPS7B).

Its subcellular location is the cytoplasm. It localises to the nucleus. Component of the COP9 signalosome complex (CSN), a complex involved in various cellular and developmental processes. The CSN complex is an essential regulator of the ubiquitin (Ubl) conjugation pathway by mediating the deneddylation of the cullin subunits of SCF-type E3 ligase complexes, leading to decrease the Ubl ligase activity of SCF-type complexes such as SCF, CSA or DDB2. The complex is also involved in phosphorylation of p53/TP53, c-jun/JUN, IkappaBalpha/NFKBIA, ITPK1 and IRF8/ICSBP, possibly via its association with CK2 and PKD kinases. CSN-dependent phosphorylation of TP53 and JUN promotes and protects degradation by the Ubl system, respectively. The chain is COP9 signalosome complex subunit 8 (Cops8) from Rattus norvegicus (Rat).